The following is a 302-amino-acid chain: Transmembrane protein 191 (302 aa).

Residues 5–147 (QEQLLQLQKD…HLELAEAKFS (143 aa)) adopt a coiled-coil conformation. Residues 39–66 (LTGRLEELRERERSLQRRRSQASRAIRG) form a disordered region. Positions 42 to 53 (RLEELRERERSL) are enriched in basic and acidic residues. Residues 242–262 (LQTLLLLPLGFLVLPLIYVVL) traverse the membrane as a helical segment.

The protein belongs to the TMEM191 family.

The protein localises to the membrane. This chain is Transmembrane protein 191, found in Mus musculus (Mouse).